A 780-amino-acid polypeptide reads, in one-letter code: Lethal(3)malignant brain tumor-like protein 3 (780 aa).

The tract at residues 1–64 (MTESASSTSG…VKKATATTTW (64 aa)) is interaction with RBPJ. Required for transcription repressor activity on Notch target genes. Residues 149 to 220 (DKDQKEERDV…RKRRGDSAVL (72 aa)) are disordered. 2 stretches are compositionally biased toward acidic residues: residues 157–166 (DVEEDNEEED) and 185–194 (EDGEERDDEM). MBT repeat units follow at residues 232–332 (WCWA…LHPP), 340–439 (FNWQ…LITP), and 448–543 (FSWD…LQPP). A CCHHC-type; degenerate zinc finger spans residues 549 to 593 (LMEASEHGGCSTPGCKGIGHFKRARHLGPHSAANCPYSEINLNKD). Residues 597-665 (PDRLSGEMPP…GAREEPTVQQ (69 aa)) are disordered. The segment at 600-710 (LSGEMPPASP…PASKVSKWST (111 aa)) is interaction with DCAF5. Residue S608 is modified to Phosphoserine. K637 is covalently cross-linked (Glycyl lysine isopeptide (Lys-Gly) (interchain with G-Cter in SUMO2)). Basic and acidic residues predominate over residues 643 to 661 (RTESEMRTSHEARGAREEP). K704 is covalently cross-linked (Glycyl lysine isopeptide (Lys-Gly) (interchain with G-Cter in SUMO2)). The region spanning 708 to 772 (WSTDEVSEFI…FNSILMFKAA (65 aa)) is the SAM domain.

Interacts with RNF2. Interacts (via SAM domain) with SAMD1 (via SAM domain); the interaction mediates L3MBTL3 binding to chromatin. Interacts with RBPJ; the interaction is required for L3MBTL3 localization to chromatin and is impaired by Notch-derived peptides containing the intracellular domain (NICD). Interacts (via SAM domain) with KDM1A. Interacts with DCAF5. Interacts with DNMT1. Interacts with E2F1. Interacts with SOX2. Interacts with SFMBT1.

The protein resides in the nucleus. In terms of biological role, is a negative regulator of Notch target genes expression, required for RBPJ-mediated transcriptional repression. It recruits KDM1A to Notch-responsive elements and promotes KDM1A-mediated H3K4me demethylation. Involved in the regulation of ubiquitin-dependent degradation of a set of methylated non-histone proteins, including SOX2, DNMT1 and E2F1. It acts as an adapter recruiting the CRL4-DCAF5 E3 ubiquitin ligase complex to methylated target proteins. Required for normal maturation of myeloid progenitor cells. This is Lethal(3)malignant brain tumor-like protein 3 from Homo sapiens (Human).